The primary structure comprises 80 residues: SPbeta prophage-derived thioredoxin-like protein YosR (80 aa).

One can recognise a Thioredoxin domain in the interval 1-80 (MRLIKLEQPN…ELDELLKELR (80 aa)). A disulfide bridge links C11 with C14.

It belongs to the thioredoxin family.

This is SPbeta prophage-derived thioredoxin-like protein YosR (yosR) from Bacillus subtilis (strain 168).